The primary structure comprises 28 residues: Probable small spore coat assembly protein B (28 aa).

The helical transmembrane segment at Val-4 to Ala-24 threads the bilayer.

This sequence belongs to the SscA family.

Its subcellular location is the membrane. The polypeptide is Probable small spore coat assembly protein B (Bacillus subtilis (strain 168)).